Reading from the N-terminus, the 192-residue chain is Imidazole glycerol phosphate synthase subunit HisH (192 aa).

Residues 1-192 (MIVIVDYGLG…QAIQGGFIND (192 aa)) form the Glutamine amidotransferase type-1 domain. Residue cysteine 77 is the Nucleophile of the active site. Catalysis depends on residues histidine 169 and glutamate 171.

As to quaternary structure, heterodimer of HisH and HisF.

The protein localises to the cytoplasm. The enzyme catalyses 5-[(5-phospho-1-deoxy-D-ribulos-1-ylimino)methylamino]-1-(5-phospho-beta-D-ribosyl)imidazole-4-carboxamide + L-glutamine = D-erythro-1-(imidazol-4-yl)glycerol 3-phosphate + 5-amino-1-(5-phospho-beta-D-ribosyl)imidazole-4-carboxamide + L-glutamate + H(+). It catalyses the reaction L-glutamine + H2O = L-glutamate + NH4(+). It functions in the pathway amino-acid biosynthesis; L-histidine biosynthesis; L-histidine from 5-phospho-alpha-D-ribose 1-diphosphate: step 5/9. Its function is as follows. IGPS catalyzes the conversion of PRFAR and glutamine to IGP, AICAR and glutamate. The HisH subunit catalyzes the hydrolysis of glutamine to glutamate and ammonia as part of the synthesis of IGP and AICAR. The resulting ammonia molecule is channeled to the active site of HisF. This chain is Imidazole glycerol phosphate synthase subunit HisH, found in Staphylococcus aureus (strain COL).